Consider the following 102-residue polypeptide: RNA-binding protein Hfq (102 aa).

Residues 9–68 (DPFLNALRRERVPVSIYLVNGIKLQGQIESFDQFVILLKNTVSQMVYKHAISTVVPSRPV) form the Sm domain. The tract at residues 63–102 (VPSRPVSHHSNNAGGGTSSNYHHGSSAQGTSAQQDSEETE) is disordered. Residues 70 to 96 (HHSNNAGGGTSSNYHHGSSAQGTSAQQ) are compositionally biased toward polar residues.

It belongs to the Hfq family. Homohexamer.

Its function is as follows. RNA chaperone that binds small regulatory RNA (sRNAs) and mRNAs to facilitate mRNA translational regulation in response to envelope stress, environmental stress and changes in metabolite concentrations. Also binds with high specificity to tRNAs. In Citrobacter koseri (strain ATCC BAA-895 / CDC 4225-83 / SGSC4696), this protein is RNA-binding protein Hfq.